The sequence spans 277 residues: Carbonyl reductase [NADPH] 1 (277 aa).

N-acetylserine is present on S2. 2 positions are modified to phosphoserine: S2 and S30. Residues 10-34, 63-64, and N90 contribute to the NADP(+) site; these read VTGGNKGIGLAIVRDLCRLFSGDVV and DI. Glutathione is bound by residues 95 to 97 and Q106; that span reads FKV. A substrate-binding site is contributed by S140. 193–194 is a glutathione binding site; it reads AY. Y194 acts as the Proton acceptor in catalysis. NADP(+)-binding positions include 194–198 and 231–233; these read YGVTK and VRT. K239 carries the post-translational modification N6-1-carboxyethyl lysine.

This sequence belongs to the short-chain dehydrogenases/reductases (SDR) family. Monomer. Expressed in kidney (at protein level).

It is found in the cytoplasm. The catalysed reaction is a secondary alcohol + NADP(+) = a ketone + NADPH + H(+). It catalyses the reaction a primary alcohol + NADP(+) = an aldehyde + NADPH + H(+). The enzyme catalyses prostaglandin F2alpha + NADP(+) = prostaglandin E2 + NADPH + H(+). It carries out the reaction prostaglandin E1 + NADP(+) = 15-oxoprostaglandin E1 + NADPH + H(+). The catalysed reaction is menadione + NADPH + H(+) = menadiol + NADP(+). It catalyses the reaction prostaglandin D2 + NADP(+) = 15-oxoprostaglandin D2 + NADPH + H(+). The enzyme catalyses prostaglandin E2 + NADP(+) = 15-oxoprostaglandin E2 + NADPH + H(+). It carries out the reaction prostaglandin F2alpha + NADP(+) = 15-oxoprostaglandin F2alpha + NADPH + H(+). The catalysed reaction is daunorubicin + NADPH + H(+) = 13-dihydrodaunorubicin + NADP(+). It catalyses the reaction S-nitrosoglutathione + NADPH + H(+) = S-(hydroxysulfenamide)glutathione + NADP(+). The enzyme catalyses cortisol + NADPH + H(+) = 20beta-dihydrocortisol + NADP(+). It carries out the reaction corticosterone + NADPH + H(+) = 20beta-dihydrocorticosterone + NADP(+). Inhibited by quercetin, rutenin and its derivatives. Its function is as follows. NADPH-dependent reductase with broad substrate specificity. Catalyzes the reduction of a wide variety of carbonyl compounds including quinones, prostaglandins, menadione, plus various xenobiotics. Catalyzes the reduction of the antitumor anthracyclines doxorubicin and daunorubicin to the cardiotoxic compounds doxorubicinol and daunorubicinol. Can convert prostaglandin E to prostaglandin F2-alpha. Can bind glutathione, which explains its higher affinity for glutathione-conjugated substrates. Catalyzes the reduction of S-nitrosoglutathione. In addition, participates in the glucocorticoid metabolism by catalyzing the NADPH-dependent cortisol/corticosterone into 20beta-dihydrocortisol (20b-DHF) or 20beta-corticosterone (20b-DHB), which are weak agonists of NR3C1 and NR3C2 in adipose tissue. The polypeptide is Carbonyl reductase [NADPH] 1 (Homo sapiens (Human)).